Reading from the N-terminus, the 276-residue chain is Secretagogin (276 aa).

EF-hand domains lie at 12-47, 105-140, 149-184, 197-232, and 240-276; these read LDAACFWQIWQRFDKDEKGYIKETELDAFFDDLLAK, DNSVEFMQIWRKYDADSSGFISAAELSNFLRDLFLH, ELEEYTSTMEKIFDRNKDGRLDLNDLARILALQENF, ERKRDFEKIFAHYDVSKTGALEGPEVDGFVKDMMEL, and VDLDKFREILLRHCDVNKDGKIQKSELALCLGLKINP. The Ca(2+) site is built by Asp-118, Asp-120, Ser-122, Glu-129, Asp-162, Asn-164, Asp-166, Arg-168, Asp-173, Asp-210, Ser-212, Thr-214, Glu-221, Asp-254, Asn-256, Asp-258, Lys-260, and Glu-265.

In terms of tissue distribution, highly expressed in pancreas, in particular in pancreatic islets and pancreatic beta-cells. Detected in prostate, adrenal gland, small intestine, stomach and thyroid (at protein level).

It is found in the cytoplasm. The protein localises to the secreted. It localises to the cytoplasmic vesicle. Its subcellular location is the secretory vesicle membrane. This is Secretagogin (Scgn) from Rattus norvegicus (Rat).